The sequence spans 466 residues: Adenosylhomocysteinase (466 aa).

The substrate site is built by T57, D132, and E192. Position 193-195 (193-195 (TTT)) interacts with NAD(+). Substrate is bound by residues K222 and D226. NAD(+)-binding positions include N227, 256–261 (GYGDVG), E279, N314, 335–337 (IGH), and N380.

Belongs to the adenosylhomocysteinase family. It depends on NAD(+) as a cofactor.

The protein localises to the cytoplasm. The enzyme catalyses S-adenosyl-L-homocysteine + H2O = L-homocysteine + adenosine. It participates in amino-acid biosynthesis; L-homocysteine biosynthesis; L-homocysteine from S-adenosyl-L-homocysteine: step 1/1. In terms of biological role, may play a key role in the regulation of the intracellular concentration of adenosylhomocysteine. This chain is Adenosylhomocysteinase, found in Brucella abortus (strain S19).